The following is a 359-amino-acid chain: 4-hydroxyproline 2-epimerase (359 aa).

The active-site Proton acceptor is the Cys-126. Residues 127-128, His-248, and Asp-274 contribute to the substrate site; that span reads GH. Cys-278 serves as the catalytic Proton donor. Substrate is bound at residue 279–280; that stretch reads GT.

The protein belongs to the proline racemase family.

The catalysed reaction is trans-4-hydroxy-L-proline = cis-4-hydroxy-D-proline. Catalyzes the epimerization of trans-4-hydroxy-L-proline (t4LHyp) to cis-4-hydroxy-D-proline (c4DHyp). Is likely involved in a degradation pathway that converts t4LHyp to alpha-ketoglutarate. Displays no proline racemase activity. This is 4-hydroxyproline 2-epimerase from Planctopirus limnophila (strain ATCC 43296 / DSM 3776 / IFAM 1008 / Mu 290) (Planctomyces limnophilus).